A 48-amino-acid polypeptide reads, in one-letter code: Hemoglobin subunit beta-B (48 aa).

The Globin domain occupies Glu2–Leu48.

It belongs to the globin family. In terms of assembly, heterotetramer of two alpha chains and two beta chains. Red blood cells.

Functionally, involved in oxygen transport from gills to the various peripheral tissues. The protein is Hemoglobin subunit beta-B of Catostomus clarkii (Desert sucker).